A 223-amino-acid polypeptide reads, in one-letter code: Deoxyribose-phosphate aldolase (223 aa).

The active-site Proton donor/acceptor is aspartate 89. Lysine 152 serves as the catalytic Schiff-base intermediate with acetaldehyde. Lysine 181 functions as the Proton donor/acceptor in the catalytic mechanism.

It belongs to the DeoC/FbaB aldolase family. DeoC type 1 subfamily.

The protein resides in the cytoplasm. The catalysed reaction is 2-deoxy-D-ribose 5-phosphate = D-glyceraldehyde 3-phosphate + acetaldehyde. The protein operates within carbohydrate degradation; 2-deoxy-D-ribose 1-phosphate degradation; D-glyceraldehyde 3-phosphate and acetaldehyde from 2-deoxy-alpha-D-ribose 1-phosphate: step 2/2. Catalyzes a reversible aldol reaction between acetaldehyde and D-glyceraldehyde 3-phosphate to generate 2-deoxy-D-ribose 5-phosphate. The sequence is that of Deoxyribose-phosphate aldolase from Listeria monocytogenes serovar 1/2a (strain ATCC BAA-679 / EGD-e).